A 248-amino-acid polypeptide reads, in one-letter code: 3-deoxy-manno-octulosonate cytidylyltransferase (248 aa).

Belongs to the KdsB family. The cofactor is Mg(2+).

The protein localises to the cytoplasm. It carries out the reaction 3-deoxy-alpha-D-manno-oct-2-ulosonate + CTP = CMP-3-deoxy-beta-D-manno-octulosonate + diphosphate. The protein operates within nucleotide-sugar biosynthesis; CMP-3-deoxy-D-manno-octulosonate biosynthesis; CMP-3-deoxy-D-manno-octulosonate from 3-deoxy-D-manno-octulosonate and CTP: step 1/1. It functions in the pathway bacterial outer membrane biogenesis; lipopolysaccharide biosynthesis. Its function is as follows. Activates KDO (a required 8-carbon sugar) for incorporation into bacterial lipopolysaccharide in Gram-negative bacteria. The polypeptide is 3-deoxy-manno-octulosonate cytidylyltransferase (Escherichia coli O157:H7).